The following is a 286-amino-acid chain: MEEKRRRARVQGAWAAPVKSQAIAQPATTAKSHLHQKPGQTWKNKEHHLSDREFVFKEPQQVVRRAPEPRVIDREGVYEISLSPTGVSRVCLYPGFVDVKEADWILEQLCQDVPWKQRTGIREDITYQQPRLTAWYGELPYTYSRITMEPNPHWHPVLRTLKNRIEENTGHTFNSLLCNLYRNEKDSVDWHSDDEPSLGRCPIIASLSFGATRTFEMRKKPPPEENGDYTYVERVKIPLDHGTLLIMEGATQADWQHRVPKEYHSREPRVNLTFRTVYPDPRGAPW.

Residues 21–45 (QAIAQPATTAKSHLHQKPGQTWKNK) form a disordered region. The span at 22 to 31 (AIAQPATTAK) shows a compositional bias: polar residues. Substrate-binding positions include tryptophan 115 and 141 to 143 (YTY). Residues 172–278 (TFNSLLCNLY…RVNLTFRTVY (107 aa)) enclose the Fe2OG dioxygenase domain. The residue at position 177 (leucine 177) is a (4R)-5-hydroxyleucine; alternate. Position 177 is a (4R)-5-oxoleucine; alternate (leucine 177). 179–181 (NLY) serves as a coordination point for 2-oxoglutarate. Histidine 191 and aspartate 193 together coordinate Fe cation. Residue aspartate 194 coordinates substrate. Residue histidine 257 participates in Fe cation binding. 2-oxoglutarate-binding positions include 269–275 (RVNLTFR) and arginine 275.

This sequence belongs to the alkB family. In terms of assembly, interacts with the ASCC complex composed of ASCC1, ASCC2 and ASCC3. Interacts directly with ASCC3, and is thereby recruited to the ASCC complex. Interacts with OTUD4; the interaction is direct. Interacts with USP7 and USP9X. It depends on Fe(2+) as a cofactor. Post-translationally, ubiquitinated; undergoes 'Lys-48'-linked polyubiquitination. OTUD4 promotes USP7 and USP9X-dependent deubiquitination of 'Lys-48'-polyubiquitinated ALKBH3 promoting the repair of alkylated DNA lesions. Ubiquitous. Detected in heart, pancreas, skeletal muscle, thymus, testis, ovary, spleen, prostate, small intestine, peripheral blood leukocytes, urinary bladder and colon.

The protein localises to the nucleus. It is found in the cytoplasm. The enzyme catalyses an N(1)-methyladenosine in mRNA + 2-oxoglutarate + O2 = an adenosine in mRNA + formaldehyde + succinate + CO2. It catalyses the reaction a methylated nucleobase within DNA + 2-oxoglutarate + O2 = a nucleobase within DNA + formaldehyde + succinate + CO2. The catalysed reaction is an N(1)-methyl-2'-deoxyadenosine in single-stranded DNA + 2-oxoglutarate + O2 = a 2'-deoxyadenosine in single-stranded DNA + formaldehyde + succinate + CO2 + H(+). It carries out the reaction an N(3)-methyl-2'-deoxycytidine in single-stranded DNA + 2-oxoglutarate + O2 = a 2'-deoxycytidine in single-stranded DNA + formaldehyde + succinate + CO2 + H(+). The enzyme catalyses a 3,N(4)-etheno-2'-deoxycytidine in single-stranded DNA + 2-oxoglutarate + O2 + H2O = a 2'-deoxycytidine in single-stranded DNA + glyoxal + succinate + CO2. With respect to regulation, activated by ascorbate. Its function is as follows. Dioxygenase that mediates demethylation of DNA and RNA containing 1-methyladenosine (m1A). Repairs alkylated DNA containing 1-methyladenosine (m1A) and 3-methylcytosine (m3C) by oxidative demethylation. Has a strong preference for single-stranded DNA. Able to process alkylated m3C within double-stranded regions via its interaction with ASCC3, which promotes DNA unwinding to generate single-stranded substrate needed for ALKBH3. Can repair exocyclic 3,N4-ethenocytosine adducs in single-stranded DNA. Also acts on RNA. Demethylates N(1)-methyladenosine (m1A) RNA, an epigenetic internal modification of messenger RNAs (mRNAs) highly enriched within 5'-untranslated regions (UTRs) and in the vicinity of start codons. Requires molecular oxygen, alpha-ketoglutarate and iron. The polypeptide is Alpha-ketoglutarate-dependent dioxygenase alkB homolog 3 (Homo sapiens (Human)).